The sequence spans 159 residues: SsrA-binding protein (159 aa).

The tract at residues lysine 131–glycine 159 is disordered. Over residues aspartate 137–glycine 159 the composition is skewed to basic and acidic residues.

It belongs to the SmpB family.

The protein localises to the cytoplasm. Functionally, required for rescue of stalled ribosomes mediated by trans-translation. Binds to transfer-messenger RNA (tmRNA), required for stable association of tmRNA with ribosomes. tmRNA and SmpB together mimic tRNA shape, replacing the anticodon stem-loop with SmpB. tmRNA is encoded by the ssrA gene; the 2 termini fold to resemble tRNA(Ala) and it encodes a 'tag peptide', a short internal open reading frame. During trans-translation Ala-aminoacylated tmRNA acts like a tRNA, entering the A-site of stalled ribosomes, displacing the stalled mRNA. The ribosome then switches to translate the ORF on the tmRNA; the nascent peptide is terminated with the 'tag peptide' encoded by the tmRNA and targeted for degradation. The ribosome is freed to recommence translation, which seems to be the essential function of trans-translation. The protein is SsrA-binding protein of Rhizobium leguminosarum bv. trifolii (strain WSM2304).